A 432-amino-acid polypeptide reads, in one-letter code: D-amino acid dehydrogenase (432 aa).

3-17 (VVILGSGVVGVTSAW) is an FAD binding site.

It belongs to the DadA oxidoreductase family. FAD serves as cofactor.

The enzyme catalyses a D-alpha-amino acid + A + H2O = a 2-oxocarboxylate + AH2 + NH4(+). Its pathway is amino-acid degradation; D-alanine degradation; NH(3) and pyruvate from D-alanine: step 1/1. Its function is as follows. Oxidative deamination of D-amino acids. The chain is D-amino acid dehydrogenase from Salmonella arizonae (strain ATCC BAA-731 / CDC346-86 / RSK2980).